Here is a 196-residue protein sequence, read N- to C-terminus: MFTQSDTGKIEEIFTTNTMAFETTAITFFFILLICFICILLLLAIFLYKCYRGHNHEEPLKTLCTGEGCVAANAEMDKPEDQDKVLMHFLNMGLPMKPSILVQKQSKEEMATSLGDNIKAEDYQKKQTYEPVNARETNHEGELAEKMPIHVHRSSDTGSQKRPLKGVTFSKEVIVVDLGNEYPTPRSYAREHKERK.

The helical transmembrane segment at 26 to 46 threads the bilayer; the sequence is ITFFFILLICFICILLLLAIF.

It localises to the membrane. This is an uncharacterized protein from Mus musculus (Mouse).